The following is a 186-amino-acid chain: GMP synthase [glutamine-hydrolyzing] subunit A (186 aa).

The Glutamine amidotransferase type-1 domain occupies 3-186 (MILIINNHGQ…FENFYDVCRS (184 aa)). Catalysis depends on cysteine 77, which acts as the Nucleophile. Active-site residues include histidine 164 and glutamate 166.

As to quaternary structure, heterodimer composed of a glutamine amidotransferase subunit (A) and a GMP-binding subunit (B).

The catalysed reaction is XMP + L-glutamine + ATP + H2O = GMP + L-glutamate + AMP + diphosphate + 2 H(+). It functions in the pathway purine metabolism; GMP biosynthesis; GMP from XMP (L-Gln route): step 1/1. In terms of biological role, catalyzes the synthesis of GMP from XMP. The protein is GMP synthase [glutamine-hydrolyzing] subunit A of Methanothermobacter thermautotrophicus (strain ATCC 29096 / DSM 1053 / JCM 10044 / NBRC 100330 / Delta H) (Methanobacterium thermoautotrophicum).